The sequence spans 499 residues: Maturase K (499 aa).

Belongs to the intron maturase 2 family. MatK subfamily.

Its subcellular location is the plastid. It localises to the chloroplast. Usually encoded in the trnK tRNA gene intron. Probably assists in splicing its own and other chloroplast group II introns. The polypeptide is Maturase K (Macrozamia communis (Burrawang palm)).